A 738-amino-acid polypeptide reads, in one-letter code: Flagellar radial spoke protein 2 (738 aa).

At arginine 104 the chain carries Asymmetric dimethylarginine. Acidic residues-rich tracts occupy residues proline 134–alanine 153 and glutamate 161–glycine 182. The segment at proline 134–isoleucine 189 is disordered. The residue at position 260 (arginine 260) is an Asymmetric dimethylarginine. The disordered stretch occupies residues alanine 357 to valine 426. Positions glutamate 371 to glutamate 415 are enriched in acidic residues. Asymmetric dimethylarginine is present on residues arginine 453, arginine 538, and arginine 615. The tract at residues alanine 674–glutamate 738 is disordered. Residues proline 689–serine 730 show a composition bias toward low complexity.

Belongs to the dpy-30 family. Post-translationally, asymmetrically dimethylated at Arg-104, Arg-260, Arg-453, Arg-538 and Arg-615 during flagellum resorption. Probably methylated by PRMT1.

It localises to the cytoplasm. The protein resides in the cytoskeleton. It is found in the flagellum axoneme. Functionally, flagellar radial spokes contribute to the regulation of dynein arm activity and thus the pattern of flagellar bending. They consist of a thin stalk, which is attached to the a subfiber of the outer doublet microtubule, and a bulbous head, which is attached to the stalk and appears to interact with the projections from the central pair of microtubules. Binds calmodulin in a calcium-dependent manner. The chain is Flagellar radial spoke protein 2 from Chlamydomonas reinhardtii (Chlamydomonas smithii).